Consider the following 427-residue polypeptide: Serine hydroxymethyltransferase (427 aa).

Residues leucine 122 and 126–128 each bind (6S)-5,6,7,8-tetrahydrofolate; that span reads GHL. The residue at position 231 (lysine 231) is an N6-(pyridoxal phosphate)lysine. 355 to 357 serves as a coordination point for (6S)-5,6,7,8-tetrahydrofolate; that stretch reads SPF.

The protein belongs to the SHMT family. As to quaternary structure, homodimer. It depends on pyridoxal 5'-phosphate as a cofactor.

It is found in the cytoplasm. It carries out the reaction (6R)-5,10-methylene-5,6,7,8-tetrahydrofolate + glycine + H2O = (6S)-5,6,7,8-tetrahydrofolate + L-serine. It participates in one-carbon metabolism; tetrahydrofolate interconversion. It functions in the pathway amino-acid biosynthesis; glycine biosynthesis; glycine from L-serine: step 1/1. Its function is as follows. Catalyzes the reversible interconversion of serine and glycine with tetrahydrofolate (THF) serving as the one-carbon carrier. This reaction serves as the major source of one-carbon groups required for the biosynthesis of purines, thymidylate, methionine, and other important biomolecules. Also exhibits THF-independent aldolase activity toward beta-hydroxyamino acids, producing glycine and aldehydes, via a retro-aldol mechanism. In Nostoc sp. (strain PCC 7120 / SAG 25.82 / UTEX 2576), this protein is Serine hydroxymethyltransferase.